A 121-amino-acid polypeptide reads, in one-letter code: UPF0295 protein OB0906 (121 aa).

The next 2 membrane-spanning stretches (helical) occupy residues 14–34 (IRTF…GGIL) and 43–63 (VIFF…YVWI).

Belongs to the UPF0295 family.

Its subcellular location is the cell membrane. The protein is UPF0295 protein OB0906 of Oceanobacillus iheyensis (strain DSM 14371 / CIP 107618 / JCM 11309 / KCTC 3954 / HTE831).